The following is a 552-amino-acid chain: Cleavage and polyadenylation specificity factor subunit 6 (552 aa).

Positions 1-213 (MADGVDHIDI…RGRFPGAVPG (213 aa)) are necessary for interaction with NXF1. The RRM domain occupies 81 to 161 (IALYIGNLTR…QNPVVTPCNK (81 aa)). Residues 81–161 (IALYIGNLTR…QNPVVTPCNK (81 aa)) form a necessary for interaction with NUDT21/CPSF5 region. The interval 81–161 (IALYIGNLTR…QNPVVTPCNK (81 aa)) is necessary for nuclear paraspeckles localization. Threonine 157 is modified (phosphothreonine). A compositionally biased stretch (polar residues) spans 169–180 (MQSRKTTQSGQM). Disordered stretches follow at residues 169–411 (MQSR…PLSE) and 479–552 (GIES…YRHR). A GAR motif is present at residues 202 to 206 (RGRGR). Low complexity predominate over residues 207–219 (FPGAVPGGDRFPG). 3 stretches are compositionally biased toward pro residues: residues 220 to 265 (PTGP…PLAG), 285 to 366 (GQPP…PPPT), and 377 to 388 (GPPPTDPYGRPP). Over residues 389-404 (PYDRGDYGPPGREMDT) the composition is skewed to basic and acidic residues. Residues threonine 404 and threonine 407 each carry the phosphothreonine modification. The sufficient for nuclear speckle localization stretch occupies residues 404–552 (TARTPLSEAE…RDREREYRHR (149 aa)). A necessary for RNA-binding region spans residues 405 to 552 (ARTPLSEAEF…RDREREYRHR (148 aa)). Residues 481–552 (ESKSYGSGSR…RDREREYRHR (72 aa)) form a necessary for interaction with SRSF3, SRSF7 and TRA2B/SFRS10 region. Residues 491–552 (RRERSRERDH…RDREREYRHR (62 aa)) are arg/Ser-rich domain. The segment covering 494 to 504 (RSRERDHSRSR) has biased composition (basic and acidic residues). Phosphoserine is present on residues serine 495, serine 501, serine 512, serine 514, and serine 526. Residues 505-515 (EKSRRHKSRSR) are compositionally biased toward basic residues. The sufficient for nuclear targeting stretch occupies residues 511 to 552 (KSRSRDRHDDYYRERSRERERHRDRDRDRDRERDREREYRHR). The segment covering 516-552 (DRHDDYYRERSRERERHRDRDRDRDRERDREREYRHR) has biased composition (basic and acidic residues).

Belongs to the RRM CPSF6/7 family. In terms of assembly, component of the cleavage factor Im (CFIm) complex which is a heterotetramer composed of two subunits of NUDT21/CPSF5 and two subunits of CPSF6 or CPSF7 or a heterodimer of CPSF6 and CPSF7. The cleavage factor Im (CFIm) complex associates with the CPSF and CSTF complexes to promote the assembly of the core mRNA 3'-processing machinery. Associates with the exon junction complex (EJC). Associates with the 80S ribosome particle. Interacts (via the RRM domain) with NUDT21/CPSF5; this interaction is direct and enhances binding to RNA. Interacts (via Arg/Ser-rich domain) with FIP1L1 (preferentially via unphosphorylated form and Arg/Glu/Asp-rich domain); this interaction mediates, at least in part, the interaction between the CFIm and CPSF complexes and may be inhibited by CPSF6 hyper-phosphorylation. Interacts (via N-terminus) with NXF1; this interaction is direct. Interacts with SRSF3. Interacts with SRSF7. Interacts with SNRNP70. Interacts with TRA2B/SFRS10. Interacts with UPF1. Interacts with UPF3B. Interacts with VIRMA. Interacts (via Arg/Ser-rich domain) with TNPO3; promoting nuclear import of CPSF6 independently of its phosphorylation status. Interacts with YTHDC1. Phosphorylated. Phosphorylated in the Arg/Ser-rich domain by SRPK1, in vitro. Post-translationally, symmetrically dimethylated on arginine residues in the GAR motif by PRMT5 in a WDR77- and CLNS1A-dependent manner. Asymmetrically dimethylated on arginine residues in the GAR motif by PRMT1.

It localises to the nucleus. The protein resides in the nucleoplasm. Its subcellular location is the nucleus speckle. The protein localises to the cytoplasm. Component of the cleavage factor Im (CFIm) complex that functions as an activator of the pre-mRNA 3'-end cleavage and polyadenylation processing required for the maturation of pre-mRNA into functional mRNAs. CFIm contributes to the recruitment of multiprotein complexes on specific sequences on the pre-mRNA 3'-end, so called cleavage and polyadenylation signals (pA signals). Most pre-mRNAs contain multiple pA signals, resulting in alternative cleavage and polyadenylation (APA) producing mRNAs with variable 3'-end formation. The CFIm complex acts as a key regulator of cleavage and polyadenylation site choice during APA through its binding to 5'-UGUA-3' elements localized in the 3'-untranslated region (UTR) for a huge number of pre-mRNAs. CPSF6 enhances NUDT21/CPSF5 binding to 5'-UGUA-3' elements localized upstream of pA signals and promotes RNA looping, and hence activates directly the mRNA 3'-processing machinery. Plays a role in mRNA export. The protein is Cleavage and polyadenylation specificity factor subunit 6 of Pongo abelii (Sumatran orangutan).